We begin with the raw amino-acid sequence, 329 residues long: Glyceraldehyde-3-phosphate dehydrogenase 1 (329 aa).

Residues 11–12, D33, and K78 contribute to the NAD(+) site; that span reads RI. D-glyceraldehyde 3-phosphate is bound by residues 148–150, T179, 208–209, and R231; these read SCT and TG. C149 (nucleophile) is an active-site residue. N313 contributes to the NAD(+) binding site.

It belongs to the glyceraldehyde-3-phosphate dehydrogenase family. Homotetramer.

It localises to the cytoplasm. The enzyme catalyses D-glyceraldehyde 3-phosphate + phosphate + NAD(+) = (2R)-3-phospho-glyceroyl phosphate + NADH + H(+). It participates in carbohydrate degradation; glycolysis; pyruvate from D-glyceraldehyde 3-phosphate: step 1/5. In Kluyveromyces lactis (strain ATCC 8585 / CBS 2359 / DSM 70799 / NBRC 1267 / NRRL Y-1140 / WM37) (Yeast), this protein is Glyceraldehyde-3-phosphate dehydrogenase 1 (GAP1).